A 130-amino-acid polypeptide reads, in one-letter code: Endoglucanase 2 (130 aa).

Catalysis depends on residues histidine 47, aspartate 98, and glutamate 107.

Belongs to the glycosyl hydrolase 9 (cellulase E) family.

The catalysed reaction is Endohydrolysis of (1-&gt;4)-beta-D-glucosidic linkages in cellulose, lichenin and cereal beta-D-glucans.. Functionally, involved in ripening fruit process. The sequence is that of Endoglucanase 2 (CEL2) from Persea americana (Avocado).